The primary structure comprises 166 residues: Co-chaperone protein HscB homolog (166 aa).

The region spanning 3–75 (QYFTLFRIEP…IDRAAYLLKT (73 aa)) is the J domain.

The protein belongs to the HscB family. As to quaternary structure, interacts with HscA and stimulates its ATPase activity.

Functionally, co-chaperone involved in the maturation of iron-sulfur cluster-containing proteins. Seems to help targeting proteins to be folded toward HscA. The chain is Co-chaperone protein HscB homolog from Neisseria meningitidis serogroup A / serotype 4A (strain DSM 15465 / Z2491).